A 323-amino-acid polypeptide reads, in one-letter code: GDP-L-fucose synthase 1 (323 aa).

Position 2 is an N-acetylalanine (Ala-2). 23 to 29 (GHRGLVG) contributes to the NADP(+) binding site. Tyr-149 (proton donor/acceptor) is an active-site residue. Residues Lys-153, 176-179 (PTNL), and His-192 contribute to the NADP(+) site. 4 residues coordinate substrate: Arg-200, Trp-215, Arg-222, and Asp-282.

This sequence belongs to the NAD(P)-dependent epimerase/dehydratase family. Fucose synthase subfamily. In terms of assembly, binds and stabilizes MUR1. Homodimer. In terms of tissue distribution, highly expressed in roots and flowers, less abundant in leaves, stems and siliques.

It carries out the reaction GDP-beta-L-fucose + NADP(+) = GDP-4-dehydro-alpha-D-rhamnose + NADPH + H(+). The protein operates within nucleotide-sugar biosynthesis; GDP-L-fucose biosynthesis via de novo pathway; GDP-L-fucose from GDP-alpha-D-mannose: step 2/2. Catalyzes the two-step NADP-dependent conversion of GDP-4-dehydro-6-deoxy-D-mannose to GDP-fucose, involving an epimerase and a reductase reaction. Not involved in the synthesis of GDP-L-galactose from GDP-D-mannose. The polypeptide is GDP-L-fucose synthase 1 (GER1) (Arabidopsis thaliana (Mouse-ear cress)).